Here is a 725-residue protein sequence, read N- to C-terminus: Phosphoribosylformylglycinamidine synthase subunit PurL (725 aa).

His41 is an active-site residue. The ATP site is built by Tyr44 and Lys83. Glu85 contributes to the Mg(2+) binding site. Substrate is bound by residues 86 to 89 (SHNH) and Arg108. The active-site Proton acceptor is the His87. Asp109 is a binding site for Mg(2+). Gln231 provides a ligand contact to substrate. Asp259 lines the Mg(2+) pocket. Residue 303–305 (ESQ) participates in substrate binding. Residues Asp485 and Gly522 each contribute to the ATP site. Asn523 provides a ligand contact to Mg(2+). Residue Ser525 coordinates substrate.

Belongs to the FGAMS family. In terms of assembly, monomer. Part of the FGAM synthase complex composed of 1 PurL, 1 PurQ and 2 PurS subunits.

Its subcellular location is the cytoplasm. The enzyme catalyses N(2)-formyl-N(1)-(5-phospho-beta-D-ribosyl)glycinamide + L-glutamine + ATP + H2O = 2-formamido-N(1)-(5-O-phospho-beta-D-ribosyl)acetamidine + L-glutamate + ADP + phosphate + H(+). The protein operates within purine metabolism; IMP biosynthesis via de novo pathway; 5-amino-1-(5-phospho-D-ribosyl)imidazole from N(2)-formyl-N(1)-(5-phospho-D-ribosyl)glycinamide: step 1/2. Its function is as follows. Part of the phosphoribosylformylglycinamidine synthase complex involved in the purines biosynthetic pathway. Catalyzes the ATP-dependent conversion of formylglycinamide ribonucleotide (FGAR) and glutamine to yield formylglycinamidine ribonucleotide (FGAM) and glutamate. The FGAM synthase complex is composed of three subunits. PurQ produces an ammonia molecule by converting glutamine to glutamate. PurL transfers the ammonia molecule to FGAR to form FGAM in an ATP-dependent manner. PurS interacts with PurQ and PurL and is thought to assist in the transfer of the ammonia molecule from PurQ to PurL. The polypeptide is Phosphoribosylformylglycinamidine synthase subunit PurL (Thermus thermophilus (strain ATCC BAA-163 / DSM 7039 / HB27)).